The chain runs to 155 residues: Ribosomal RNA large subunit methyltransferase H (155 aa).

S-adenosyl-L-methionine contacts are provided by residues Leu72, Gly103, and 122 to 127 (LSDLTL).

The protein belongs to the RNA methyltransferase RlmH family. As to quaternary structure, homodimer.

It localises to the cytoplasm. It catalyses the reaction pseudouridine(1915) in 23S rRNA + S-adenosyl-L-methionine = N(3)-methylpseudouridine(1915) in 23S rRNA + S-adenosyl-L-homocysteine + H(+). Specifically methylates the pseudouridine at position 1915 (m3Psi1915) in 23S rRNA. The sequence is that of Ribosomal RNA large subunit methyltransferase H from Paracidovorax citrulli (strain AAC00-1) (Acidovorax citrulli).